Reading from the N-terminus, the 981-residue chain is Alpha-mannosidase (981 aa).

Zn(2+) contacts are provided by His23, Asp25, and Asp145. Asp145 functions as the Nucleophile in the catalytic mechanism. A glycan (N-linked (GlcNAc...) asparagine) is linked at Asn312. Position 386 (His386) interacts with Zn(2+). Disulfide bonds link Cys422-Cys432, Cys442-Cys450, and Cys800-Cys807. Residue Asn446 is glycosylated (N-linked (GlcNAc...) asparagine). Residues 938-957 (KKMKWSVEGDNEQEPQAVRG) form a disordered region.

Belongs to the glycosyl hydrolase 38 family. As to quaternary structure, dimer of dimers of heavy and light subunits. The cofactor is Zn(2+). In terms of processing, produced as a precursor which is then proteolytically cleaved into a 66kD heavy subunit and a 44kD light subunit. Cleavage probably occurs in protein bodies/protein storage vacuoles.

It is found in the protein storage vacuole. It catalyses the reaction Hydrolysis of terminal, non-reducing alpha-D-mannose residues in alpha-D-mannosides.. With respect to regulation, inhibited by 2,3,4,6-tetra-O-acetyl-5-fluoro-beta-L-gulopyranosyl fluoride which acts as a slow substrate, doubling as a competitive inhibitor as it forms a high steady state concentration of glycosyl-enzyme intermediate that blocks the active site. Inhibited by 2,3,4,6-tetra-O-acetyl-5-fluoro-alpha-D-mannopyranosyl fluoride which also acts as a slow substrate but no intermediates accumulate. Inhibited by EDTA. Inhibited by metal ion Cu(2+). Inhibited by metal ions Fe(2+), Cd(2+) and Co(2+). Inhibited by metal ions Ag(+) and Hg(2+). Competitively inhibited by mannono-1-4-lactone and mannono-1-5-lactone. Inhibited by swainsonine but not by 1-desoxymannojirimycin. Inhibited by pyrrolidine-3,4-diol derivatives. Its function is as follows. Liberates mannose from p-nitrophenyl-alpha-D-mannoside. Liberates mannose from further alpha-D-mannosides including methyl-, benzyl-alpha-D-mannoside, 1-6-linked di-, tri- and tetrasaccharides of alpha-D-mannose and mannosyl-rhamnose. Liberates mannose from various glycoproteins like ovalbumin and ovomucoid. Does not hydrolyze beta-D-mannosides. Has glycosyltransferase activity, forming disaccharides from mannose and lyxose but not from glucose, galactose, ribose, xylose or arabinose. In Canavalia ensiformis (Jack bean), this protein is Alpha-mannosidase.